A 569-amino-acid chain; its full sequence is Sulfite reductase [NADPH] hemoprotein beta-component (569 aa).

[4Fe-4S] cluster contacts are provided by Cys433, Cys439, Cys478, and Cys482. Position 482 (Cys482) interacts with siroheme.

Belongs to the nitrite and sulfite reductase 4Fe-4S domain family. Alpha(8)-beta(8). The alpha component is a flavoprotein, the beta component is a hemoprotein. Requires siroheme as cofactor. It depends on [4Fe-4S] cluster as a cofactor.

The enzyme catalyses hydrogen sulfide + 3 NADP(+) + 3 H2O = sulfite + 3 NADPH + 4 H(+). It participates in sulfur metabolism; hydrogen sulfide biosynthesis; hydrogen sulfide from sulfite (NADPH route): step 1/1. Functionally, component of the sulfite reductase complex that catalyzes the 6-electron reduction of sulfite to sulfide. This is one of several activities required for the biosynthesis of L-cysteine from sulfate. In Shewanella sediminis (strain HAW-EB3), this protein is Sulfite reductase [NADPH] hemoprotein beta-component.